The sequence spans 541 residues: Putative transferase YhbX (541 aa).

Over 1–60 (MTVFNKFARSFKSHWLLYLSVIVFGITNLVASSGAHMVQRLLFFVLTILVVKRISSLPLR) the chain is Periplasmic. A helical membrane pass occupies residues 61 to 81 (LLVAAPFVLLTAADMSISLYS). Residues 82 to 110 (WCTFGTTFNDGFAISVLQSDPDEVAKMLG) lie on the Cytoplasmic side of the membrane. The chain crosses the membrane as a helical span at residues 111 to 131 (MYSPYLCAFAFLSLLFLAVII). At 132–141 (KYDVSLPTKK) the chain is on the periplasmic side. The helical transmembrane segment at 142–162 (VTGILLLIVISGSLFSACQFA) threads the bilayer. The Cytoplasmic segment spans residues 163-264 (YKDAKNKNAF…RKQIKLFNQA (102 aa)). Residues 265–285 (ISGAPYTALSVPLSLTADSVL) form a helical membrane-spanning segment. The Periplasmic segment spans residues 286 to 541 (SHDIHNYPDN…QGNPTPEGQG (256 aa)).

Belongs to the phosphoethanolamine transferase family.

It is found in the cell inner membrane. There are several lipid A forms in this strain, including a phosphoethanolamine (1-O-P-pEtN) form; overexpression of this gene does not lead to higher levels of the 1-O-P-pEtN form of lipid A. In Escherichia coli O157:H7, this protein is Putative transferase YhbX (yhbX).